A 264-amino-acid chain; its full sequence is Thiazole synthase (264 aa).

Lysine 106 (schiff-base intermediate with DXP) is an active-site residue. Residues glycine 167, 193–194 (AG), and 215–216 (NS) contribute to the 1-deoxy-D-xylulose 5-phosphate site.

Belongs to the ThiG family. Homotetramer. Forms heterodimers with either ThiH or ThiS.

It localises to the cytoplasm. It carries out the reaction [ThiS sulfur-carrier protein]-C-terminal-Gly-aminoethanethioate + 2-iminoacetate + 1-deoxy-D-xylulose 5-phosphate = [ThiS sulfur-carrier protein]-C-terminal Gly-Gly + 2-[(2R,5Z)-2-carboxy-4-methylthiazol-5(2H)-ylidene]ethyl phosphate + 2 H2O + H(+). Its pathway is cofactor biosynthesis; thiamine diphosphate biosynthesis. Functionally, catalyzes the rearrangement of 1-deoxy-D-xylulose 5-phosphate (DXP) to produce the thiazole phosphate moiety of thiamine. Sulfur is provided by the thiocarboxylate moiety of the carrier protein ThiS. In vitro, sulfur can be provided by H(2)S. The polypeptide is Thiazole synthase (Prochlorococcus marinus (strain MIT 9215)).